A 64-amino-acid polypeptide reads, in one-letter code: Conotoxin Pu3.5 (64 aa).

A signal peptide spans 1–16; it reads LGVLLTICLLLFPLTA. Positions 17–49 are excised as a propeptide; it reads VPLDGDQPADQPAGRMQDDISSEQHPFFDPVKR. 3 disulfide bridges follow: C50–C63, C51–C58, and C54–C62.

Belongs to the conotoxin M superfamily. As to expression, expressed by the venom duct.

The protein resides in the secreted. The protein is Conotoxin Pu3.5 of Conus pulicarius (Flea-bitten cone).